Reading from the N-terminus, the 1422-residue chain is DNA-directed RNA polymerase subunit beta (1422 aa).

The segment at 1392–1422 is disordered; sequence QAAREAAERDLGGGPLGAPRGAVASGEKSSA.

This sequence belongs to the RNA polymerase beta chain family. The RNAP catalytic core consists of 2 alpha, 1 beta, 1 beta' and 1 omega subunit. When a sigma factor is associated with the core the holoenzyme is formed, which can initiate transcription.

The catalysed reaction is RNA(n) + a ribonucleoside 5'-triphosphate = RNA(n+1) + diphosphate. In terms of biological role, DNA-dependent RNA polymerase catalyzes the transcription of DNA into RNA using the four ribonucleoside triphosphates as substrates. This chain is DNA-directed RNA polymerase subunit beta, found in Anaeromyxobacter dehalogenans (strain 2CP-1 / ATCC BAA-258).